A 54-amino-acid chain; its full sequence is Metallothionein-4 (54 aa).

It belongs to the metallothionein superfamily. Type 11 family.

In Yarrowia lipolytica (strain CLIB 122 / E 150) (Yeast), this protein is Metallothionein-4 (MTP4).